The primary structure comprises 91 residues: Conotoxin Im9.1 (91 aa).

The N-terminal stretch at 1-23 (MSKVGVVPLIFLVLLSIAALQNG) is a signal peptide. Residues 24-55 (DDPRRQRDEKQSPQGDILRSTLTKYSYNIQRR) constitute a propeptide that is removed on maturation. Cystine bridges form between cysteine 56/cysteine 72, cysteine 63/cysteine 83, and cysteine 66/cysteine 86.

It belongs to the conotoxin M superfamily. In terms of tissue distribution, expressed by the venom duct.

The protein localises to the secreted. Its function is as follows. Probable neurotoxin. The polypeptide is Conotoxin Im9.1 (Conus imperialis (Imperial cone)).